The following is a 199-amino-acid chain: Desiccation stress protein DSP-22, chloroplastic (199 aa).

Residues 1-52 constitute a chloroplast transit peptide; it reads MASSTCYATIPAMSCRGQSTITRFGPNNLFLGKQSYELPLMRRNAKFTVRSM. Positions 53-62 are enriched in basic and acidic residues; it reads REDNEKEEQQ. The interval 53 to 82 is disordered; it reads REDNEKEEQQQQKQQQTHDGGPDLTPNRTE. A run of 2 helical transmembrane segments spans residues 130–152 and 172–191; these read FNGG…LIPI and IWNG…TEYV.

This sequence belongs to the ELIP/psbS family. As to expression, preferentially localized in the chloroplast-rich palisade parenchyma cells, in extracts of desiccated leaves, in seeds, but not in roots or untreated leaves.

Its subcellular location is the plastid. It is found in the chloroplast thylakoid membrane. Possibly exerts a protective role during water loss. The sequence is that of Desiccation stress protein DSP-22, chloroplastic (DSP-22) from Craterostigma plantagineum (Blue gem).